A 408-amino-acid chain; its full sequence is GTPase Obg (408 aa).

The region spanning 1–159 (MKFFDEARIE…RNLHLELKVL (159 aa)) is the Obg domain. In terms of domain architecture, OBG-type G spans 160 to 334 (ADVGLLGMPN…LIFALQDFLD (175 aa)). Residues 166-173 (GMPNAGKS), 191-195 (FTTLQ), 213-216 (DIPG), 284-287 (NKLD), and 315-317 (SAL) contribute to the GTP site. Mg(2+) is bound by residues Ser-173 and Thr-193. The tract at residues 385-408 (AEDALAEDALDDDADGEDADPNAR) is disordered.

Belongs to the TRAFAC class OBG-HflX-like GTPase superfamily. OBG GTPase family. As to quaternary structure, monomer. Requires Mg(2+) as cofactor.

It localises to the cytoplasm. An essential GTPase which binds GTP, GDP and possibly (p)ppGpp with moderate affinity, with high nucleotide exchange rates and a fairly low GTP hydrolysis rate. Plays a role in control of the cell cycle, stress response, ribosome biogenesis and in those bacteria that undergo differentiation, in morphogenesis control. The sequence is that of GTPase Obg from Azoarcus sp. (strain BH72).